The chain runs to 429 residues: Phosphoribosylamine--glycine ligase (429 aa).

Residues 109–316 (KDFLARHKIP…LVELCLKACD (208 aa)) form the ATP-grasp domain. 135 to 196 (LREKGTPIVV…EEFLDGEEAS (62 aa)) provides a ligand contact to ATP. Mg(2+)-binding residues include E286 and N288.

The protein belongs to the GARS family. It depends on Mg(2+) as a cofactor. Mn(2+) is required as a cofactor.

The enzyme catalyses 5-phospho-beta-D-ribosylamine + glycine + ATP = N(1)-(5-phospho-beta-D-ribosyl)glycinamide + ADP + phosphate + H(+). The protein operates within purine metabolism; IMP biosynthesis via de novo pathway; N(1)-(5-phospho-D-ribosyl)glycinamide from 5-phospho-alpha-D-ribose 1-diphosphate: step 2/2. The protein is Phosphoribosylamine--glycine ligase of Haemophilus influenzae (strain ATCC 51907 / DSM 11121 / KW20 / Rd).